A 235-amino-acid polypeptide reads, in one-letter code: Putative cobalt transport protein CbiM 2 (235 aa).

7 consecutive transmembrane segments (helical) span residues 9 to 29 (PAGW…MGII), 41 to 61 (YLPL…LKLP), 80 to 100 (FGYC…ALLL), 107 to 127 (TMGA…YAVY), 135 to 155 (INIY…TYII), 160 to 180 (LALA…AFFS), and 181 to 201 (IFAI…ALVF).

Belongs to the CbiM family. As to quaternary structure, forms an energy-coupling factor (ECF) transporter complex composed of an ATP-binding protein (A component, CbiO), a transmembrane protein (T component, CbiQ) and 2 possible substrate-capture proteins (S components, CbiM and CbiN) of unknown stoichimetry.

The protein localises to the cell membrane. It participates in cofactor biosynthesis; adenosylcobalamin biosynthesis. Part of the energy-coupling factor (ECF) transporter complex CbiMNOQ involved in cobalt import. The sequence is that of Putative cobalt transport protein CbiM 2 from Methanosphaerula palustris (strain ATCC BAA-1556 / DSM 19958 / E1-9c).